The following is a 962-amino-acid chain: Translation initiation factor IF-2 (962 aa).

A disordered region spans residues 99–366; sequence VKAAQTQAAP…KKGKKLKLEP (268 aa). Positions 117–141 are enriched in basic and acidic residues; that stretch reads DAAKARAEAAARAEARAKAEAEAAK. The segment covering 145–155 has biased composition (low complexity); that stretch reads AKAGNKAKPAA. A compositionally biased stretch (basic and acidic residues) spans 173–216; sequence KPAEESKAEKAQADKMPSEKPAEPKEKAAKPKHERNGKGKDAKK. The segment covering 219-234 has biased composition (low complexity); that stretch reads KPAAPAVPQPVVSAEE. Residues 235–269 show a composition bias toward basic and acidic residues; sequence QAQRDEEARRAAALRAHQEALLKEKQERQARREAM. Over residues 270–283 the composition is skewed to low complexity; sequence KQQAEQQAKAAQEA. Basic and acidic residues-rich tracts occupy residues 314–327 and 338–354; these read AKKE…DEGQ and GGRD…ERVR. The tr-type G domain maps to 462–631; it reads PRPPVVTVMG…LLEAEVLELT (170 aa). A G1 region spans residues 471–478; that stretch reads GHVDHGKT. A GTP-binding site is contributed by 471-478; sequence GHVDHGKT. Positions 496 to 500 are G2; the sequence is GITQH. The tract at residues 517-520 is G3; that stretch reads DTPG. Residues 517 to 521 and 571 to 574 each bind GTP; these read DTPGH and NKID. A G4 region spans residues 571 to 574; the sequence is NKID. Positions 607-609 are G5; it reads SAK.

The protein belongs to the TRAFAC class translation factor GTPase superfamily. Classic translation factor GTPase family. IF-2 subfamily.

It localises to the cytoplasm. One of the essential components for the initiation of protein synthesis. Protects formylmethionyl-tRNA from spontaneous hydrolysis and promotes its binding to the 30S ribosomal subunits. Also involved in the hydrolysis of GTP during the formation of the 70S ribosomal complex. The protein is Translation initiation factor IF-2 of Neisseria meningitidis serogroup B (strain ATCC BAA-335 / MC58).